The primary structure comprises 109 residues: Thiosulfate sulfurtransferase GlpE (109 aa).

In terms of domain architecture, Rhodanese spans 17 to 105 (KEGKTALVDI…WARSYPQDIT (89 aa)). Cys-65 serves as the catalytic Cysteine persulfide intermediate.

It belongs to the GlpE family.

Its subcellular location is the cytoplasm. The catalysed reaction is thiosulfate + hydrogen cyanide = thiocyanate + sulfite + 2 H(+). The enzyme catalyses thiosulfate + [thioredoxin]-dithiol = [thioredoxin]-disulfide + hydrogen sulfide + sulfite + 2 H(+). In terms of biological role, transferase that catalyzes the transfer of sulfur from thiosulfate to thiophilic acceptors such as cyanide or dithiols. May function in a CysM-independent thiosulfate assimilation pathway by catalyzing the conversion of thiosulfate to sulfite, which can then be used for L-cysteine biosynthesis. The chain is Thiosulfate sulfurtransferase GlpE from Yersinia pestis.